A 550-amino-acid chain; its full sequence is Methionine--tRNA ligase (550 aa).

A 'HIGH' region motif is present at residues 13 to 23 (PYANGEIHLGH). Residues Cys-144, Cys-147, Cys-157, and Cys-160 each coordinate Zn(2+). A 'KMSKS' region motif is present at residues 329 to 333 (KMSKS). Lys-332 contributes to the ATP binding site.

Belongs to the class-I aminoacyl-tRNA synthetase family. MetG type 1 subfamily. As to quaternary structure, monomer. Zn(2+) is required as a cofactor.

The protein localises to the cytoplasm. The enzyme catalyses tRNA(Met) + L-methionine + ATP = L-methionyl-tRNA(Met) + AMP + diphosphate. Its function is as follows. Is required not only for elongation of protein synthesis but also for the initiation of all mRNA translation through initiator tRNA(fMet) aminoacylation. This is Methionine--tRNA ligase from Ruthia magnifica subsp. Calyptogena magnifica.